Consider the following 147-residue polypeptide: Hemoglobin subunit beta (147 aa).

Positions 3 to 147 constitute a Globin domain; that stretch reads HWTPEEKQYI…VAHALALGYH (145 aa). Residues H64 and H93 each coordinate heme b.

This sequence belongs to the globin family. Heterotetramer of two alpha-D chains and two beta chains. As to expression, red blood cells.

In terms of biological role, involved in oxygen transport from the lung to the various peripheral tissues. This Chelonoidis niger (Galapagos giant tortoise) protein is Hemoglobin subunit beta (HBB).